The sequence spans 512 residues: Monocarboxylate transporter 10 (512 aa).

The interval 1-44 (MVPSQEEPAAERETNEAQPPGPAPSDDAPLPGPGPSDVSDVAAE) is disordered. Over 1-63 (MVPSQEEPAA…AGSEPPVPPE (63 aa)) the chain is Cytoplasmic. A helical transmembrane segment spans residues 64–84 (GGWGWLVMLAAMWCNGSVFGI). Over 85–111 (QNAYGVLFVSMLDTFKAKDDDNMAFKT) the chain is Extracellular. Residues 112-132 (AWVGSLSMGMIFFCCPIVSVF) traverse the membrane as a helical segment. At 133 to 141 (TDMFGCRRT) the chain is on the cytoplasmic side. The chain crosses the membrane as a helical span at residues 142–162 (AVVGAAVGFIGLMSSSFVSSI). Residues 163–168 (EPLYLT) lie on the Extracellular side of the membrane. Residues 169–189 (YGIIFACGCSFAYQPSLVILG) traverse the membrane as a helical segment. The Cytoplasmic portion of the chain corresponds to 190 to 201 (HYFKKRLGLVNG). The chain crosses the membrane as a helical span at residues 202–222 (IVTAGSSVFTILLPLLLGNLI). Topologically, residues 223–232 (SSVKLFNTLR) are extracellular. Residues 233-253 (ILCIFMFVLFLAGFTYRPLVP) form a helical membrane-spanning segment. Residues 254 to 291 (STKEKESGGSRSSFFSRRKLSPPKKVFNFALFKETTYA) are Cytoplasmic-facing. Ser260 carries the phosphoserine modification. A helical membrane pass occupies residues 292 to 312 (VWAAGIPLALFGYFVPYVHLM). The Extracellular segment spans residues 313 to 326 (NHVKERFQDVNNKE). The chain crosses the membrane as a helical span at residues 327–347 (VLFMCIGITSGVGRLLFGRIA). At 348 to 362 (DYLPGVKKVYLQVLS) the chain is on the cytoplasmic side. Residues 363–383 (FFFIGLMSMMIPLCSAFGALI) traverse the membrane as a helical segment. A topological domain (extracellular) is located at residue Ala384. The chain crosses the membrane as a helical span at residues 385–405 (VCLAMGLFDGCFISIMAPIAF). The Cytoplasmic segment spans residues 406 to 416 (ELVGPQDASQA). The chain crosses the membrane as a helical span at residues 417-437 (IGFLLGFMSIPMTVGPPIAGL). At 438-448 (LHDKLGTYDVA) the chain is on the extracellular side. The chain crosses the membrane as a helical span at residues 449-469 (FYLAGIPPFVGGVVLCLIPWI). Over 470–512 (HSKKQRKISKNAGGEKMEKMLENQSSLLSGSSGIFKKDSASII) the chain is Cytoplasmic. Residues Ser495, Ser498, Ser500, and Ser501 each carry the phosphoserine modification.

This sequence belongs to the major facilitator superfamily. Monocarboxylate porter (TC 2.A.1.13) family. Post-translationally, not N-glycosylated. Highly expressed in small intestine, particularly in jejunum and ileum, scarcely in colon and substantially in kidney, liver and skeletal muscle. In the brain expression is low and appears to be restricted to a subset of neurons, microglia cells, and oligodendrocytes.

It is found in the cell membrane. The protein localises to the basolateral cell membrane. It catalyses the reaction L-tryptophan(in) = L-tryptophan(out). The enzyme catalyses L-tyrosine(in) = L-tyrosine(out). The catalysed reaction is L-phenylalanine(in) = L-phenylalanine(out). It carries out the reaction 3,3',5-triiodo-L-thyronine(out) = 3,3',5-triiodo-L-thyronine(in). It catalyses the reaction L-thyroxine(out) = L-thyroxine(in). In terms of biological role, sodium- and proton-independent thyroid hormones and aromatic acids transporter. Mediates both uptake and efflux of 3,5,3'-triiodothyronine (T3) and 3,5,3',5'-tetraiodothyronine (T4) with high affinity, suggesting a role in the homeostasis of thyroid hormone levels. Responsible for low affinity bidirectional transport of the aromatic amino acids, such as phenylalanine, tyrosine, tryptophan and L-3,4-dihydroxyphenylalanine (L-dopa). Plays an important role in homeostasis of aromatic amino acids. The chain is Monocarboxylate transporter 10 (Slc16a10) from Mus musculus (Mouse).